The chain runs to 285 residues: Putative pyruvate, phosphate dikinase regulatory protein (285 aa).

ADP is bound at residue 165–172; that stretch reads GVSRTSKT.

The protein belongs to the pyruvate, phosphate/water dikinase regulatory protein family. PDRP subfamily.

The catalysed reaction is N(tele)-phospho-L-histidyl/L-threonyl-[pyruvate, phosphate dikinase] + ADP = N(tele)-phospho-L-histidyl/O-phospho-L-threonyl-[pyruvate, phosphate dikinase] + AMP + H(+). The enzyme catalyses N(tele)-phospho-L-histidyl/O-phospho-L-threonyl-[pyruvate, phosphate dikinase] + phosphate + H(+) = N(tele)-phospho-L-histidyl/L-threonyl-[pyruvate, phosphate dikinase] + diphosphate. Its function is as follows. Bifunctional serine/threonine kinase and phosphorylase involved in the regulation of the pyruvate, phosphate dikinase (PPDK) by catalyzing its phosphorylation/dephosphorylation. The chain is Putative pyruvate, phosphate dikinase regulatory protein from Lactobacillus delbrueckii subsp. bulgaricus (strain ATCC 11842 / DSM 20081 / BCRC 10696 / JCM 1002 / NBRC 13953 / NCIMB 11778 / NCTC 12712 / WDCM 00102 / Lb 14).